Reading from the N-terminus, the 361-residue chain is G kinase-anchoring protein 1-A (361 aa).

Disordered stretches follow at residues 22–111 and 140–183; these read DSSS…EDWQ and FEES…KDFQ. A compositionally biased stretch (low complexity) spans 35–48; it reads AHSSGKAHSGSAAR. Residues 51–79 are a coiled coil; that stretch reads NKGNEKKKEKRRKKKEQQQSEANELRNLA. The segment covering 158-168 has biased composition (basic residues); sequence KVNKKDKRKNN. 2 coiled-coil regions span residues 246 to 296 and 326 to 346; these read KDGR…QEGE and AALEQERSKVKILQAEQVKYQ.

This sequence belongs to the GKAP1 family.

The protein resides in the golgi apparatus. In terms of biological role, may play a role in the regulation of insulin-dependent IRS1 tyrosine phosphorylation in adipocytes. This chain is G kinase-anchoring protein 1-A (gkap1-a), found in Xenopus laevis (African clawed frog).